Consider the following 323-residue polypeptide: Nucleotide-binding protein ZMO1325 (323 aa).

Position 25-32 (Gly-25–Ser-32) interacts with ATP. Position 78 to 81 (Asp-78 to Thr-81) interacts with GTP.

Belongs to the RapZ-like family.

Functionally, displays ATPase and GTPase activities. The protein is Nucleotide-binding protein ZMO1325 of Zymomonas mobilis subsp. mobilis (strain ATCC 31821 / ZM4 / CP4).